The primary structure comprises 344 residues: tRNA N6-adenosine threonylcarbamoyltransferase (344 aa).

2 residues coordinate Fe cation: His110 and His114. Substrate is bound by residues Ala133–Ala137, Asp166, Gly179, and Asn278. Residue Asp303 coordinates Fe cation.

It belongs to the KAE1 / TsaD family. Fe(2+) is required as a cofactor.

Its subcellular location is the cytoplasm. It catalyses the reaction L-threonylcarbamoyladenylate + adenosine(37) in tRNA = N(6)-L-threonylcarbamoyladenosine(37) in tRNA + AMP + H(+). Required for the formation of a threonylcarbamoyl group on adenosine at position 37 (t(6)A37) in tRNAs that read codons beginning with adenine. Is involved in the transfer of the threonylcarbamoyl moiety of threonylcarbamoyl-AMP (TC-AMP) to the N6 group of A37, together with TsaE and TsaB. TsaD likely plays a direct catalytic role in this reaction. The protein is tRNA N6-adenosine threonylcarbamoyltransferase of Chlamydia caviae (strain ATCC VR-813 / DSM 19441 / 03DC25 / GPIC) (Chlamydophila caviae).